Here is a 610-residue protein sequence, read N- to C-terminus: UvrABC system protein C (610 aa).

The region spanning 16 to 94 is the GIY-YIG domain; that stretch reads SAPGVYRMYD…IKQYMPKYNV (79 aa). In terms of domain architecture, UVR spans 203–238; it reads KQVISQLVAKMETAAIDMEYERAAQYRDQITALRRV.

Belongs to the UvrC family. In terms of assembly, interacts with UvrB in an incision complex.

It is found in the cytoplasm. In terms of biological role, the UvrABC repair system catalyzes the recognition and processing of DNA lesions. UvrC both incises the 5' and 3' sides of the lesion. The N-terminal half is responsible for the 3' incision and the C-terminal half is responsible for the 5' incision. The polypeptide is UvrABC system protein C (Shewanella frigidimarina (strain NCIMB 400)).